Consider the following 368-residue polypeptide: Putative transport protein bbp_117 (368 aa).

8 helical membrane-spanning segments follow: residues 13 to 35, 39 to 61, 68 to 90, 159 to 181, 216 to 238, 248 to 270, 277 to 299, and 314 to 336; these read VIFS…RPFF, AWAS…LLWG, VMMT…NSLI, HFGR…YWNG, LGVV…ISGI, IIIF…IWLY, WGTV…RPIL, and GVIG…VLII.

It belongs to the autoinducer-2 exporter (AI-2E) (TC 2.A.86) family.

The protein resides in the cell membrane. The sequence is that of Putative transport protein bbp_117 from Buchnera aphidicola subsp. Baizongia pistaciae (strain Bp).